The chain runs to 260 residues: Putative ABC transporter ATP-binding protein PH0132 (260 aa).

The ABC transporter domain occupies 2–234; the sequence is IEFRDVWFWY…DLEGFGLKEP (233 aa). ATP is bound at residue 34-41; that stretch reads GPNGSGKT.

Belongs to the ABC transporter superfamily.

It localises to the cell membrane. Probably part of an ABC transporter complex. Responsible for energy coupling to the transport system. In Pyrococcus horikoshii (strain ATCC 700860 / DSM 12428 / JCM 9974 / NBRC 100139 / OT-3), this protein is Putative ABC transporter ATP-binding protein PH0132.